Reading from the N-terminus, the 1521-residue chain is Lysophospholipase NTE1 (1521 aa).

Residues 1–50 are Cytoplasmic-facing; the sequence is MDVVNSTARAAVTSATAVTAVTGTGDRHPNPLSSAVAAASDVANAHGSSS. A helical transmembrane segment spans residues 51–71; the sequence is WLGLFARVVLWLLQFVSMVLY. Residues 72–96 are Lumenal-facing; the sequence is YAIKLATISVPTLLYTLFSTSLTVT. The helical transmembrane segment at 97-117 threads the bilayer; that stretch reads MNATTLMLIVAAMIGAISWVV. Topologically, residues 118 to 1521 are cytoplasmic; that stretch reads RYRYLNMYSR…RTMAPRRASI (1404 aa). Disordered stretches follow at residues 280–301, 315–372, and 738–768; these read HADEDNSEPGTTTHSGLFPNYP, SVPN…SAHP, and HAMDSAQSIRSPQRSPQPFAESMRSGNKVDD. Composition is skewed to polar residues over residues 316–334 and 738–753; these read VPNTPQMDASASSSANNLP and HAMDSAQSIRSPQRSP. Residues 670 to 789 and 837 to 957 each bind a nucleoside 3',5'-cyclic phosphate; these read PASP…GGLA and RLTN…IASR. One can recognise a PNPLA domain in the interval 1217-1381; sequence LVLGGGGARG…VDNLTVSHMK (165 aa). The short motif at 1221–1226 is the GXGXXG element; that stretch reads GGGARG. Residues 1248–1252 carry the GXSXG motif; the sequence is GTSIG. Residue Ser-1250 is the Nucleophile of the active site. Asp-1368 functions as the Proton acceptor in the catalytic mechanism. The DGA/G motif lies at 1368–1370; that stretch reads DGG.

This sequence belongs to the NTE family.

Its subcellular location is the endoplasmic reticulum membrane. It carries out the reaction a 1-acyl-sn-glycero-3-phosphocholine + H2O = sn-glycerol 3-phosphocholine + a fatty acid + H(+). Inhibited by organophosphorus esters. In terms of biological role, intracellular phospholipase B that catalyzes the double deacylation of phosphatidylcholine (PC) to glycerophosphocholine (GroPCho). Plays an important role in membrane lipid homeostasis. Responsible for the rapid PC turnover in response to inositol, elevated temperatures, or when choline is present in the growth medium. The sequence is that of Lysophospholipase NTE1 (NTE1) from Chaetomium globosum (strain ATCC 6205 / CBS 148.51 / DSM 1962 / NBRC 6347 / NRRL 1970) (Soil fungus).